Reading from the N-terminus, the 757-residue chain is Protein hunchback (757 aa).

2 disordered regions span residues 30-51 (EPGHHLDGNSVASSPRQSPIPS) and 171-213 (EKLQ…EDMK). The segment covering 39 to 51 (SVASSPRQSPIPS) has biased composition (polar residues). Residues 197–213 (EPEKEHDQMSNSSEDMK) show a composition bias toward basic and acidic residues. C2H2-type zinc fingers lie at residues 239 to 261 (YKCKTCGVVAITKVDFWAHTRTH), 268 to 290 (LQCPKCPFVTEFKHHLEYHIRKH), 296 to 318 (FQCDKCSYTCVNKSMLNSHRKSH), and 324 to 348 (YRCADCDYATKYCHSFKLHLRKYGH). Disordered stretches follow at residues 367-416 (DVYG…VATS), 511-535 (EQLQQQNQQQSDNEEEDQDDEYERK), and 602-694 (MTSP…APPS). Low complexity-rich tracts occupy residues 397-414 (VAAVAPQQQQSQPAQPVA) and 512-521 (QLQQQNQQQS). A compositionally biased stretch (acidic residues) spans 522–531 (DNEEEDQDDE). Low complexity predominate over residues 651 to 694 (ANTSASSTASSSGNSSNASSNSNGNSSSNSSSNGTTSAVAAPPS). 2 consecutive C2H2-type zinc fingers follow at residues 704–726 (YECKYCDIFFKDAVLYTIHMGYH) and 732–756 (FKCNMCGEKCDGPVGLFVHMARNAH).

The protein belongs to the hunchback C2H2-type zinc-finger protein family.

Its subcellular location is the nucleus. In terms of biological role, gap class segmentation protein that controls development of head structures. This chain is Protein hunchback (hb), found in Drosophila sechellia (Fruit fly).